The following is an 866-amino-acid chain: Protein SEY1 (866 aa).

Over 1–746 the chain is Cytoplasmic; that stretch reads MVSNGHFAYA…KRSAIGGMTQ (746 aa). Residues 48–305 form the GB1/RHD3-type G domain; that stretch reads GFNYHLISVF…IPADGFAVYA (258 aa). 58-65 contacts GTP; that stretch reads GSQSTGKS. Residues 480–506 adopt a coiled-coil conformation; that stretch reads SNYTQELALYQKDLEKISAQLRKDEMR. Residues 747-767 traverse the membrane as a helical segment; that stretch reads IPVYFYILLLALGWNEIIAVL. Over 768–770 the chain is Lumenal; it reads RNP. The chain crosses the membrane as a helical span at residues 771 to 791; that stretch reads VYFFMLFLCSVAAYIIYQLNL. Topologically, residues 792–866 are cytoplasmic; the sequence is WGPMVKMAEA…DDEVEGEETW (75 aa). Residues 840–866 are disordered; that stretch reads SHVRSGRNATKINERDDDDEVEGEETW. Acidic residues predominate over residues 854-866; that stretch reads RDDDDEVEGEETW.

Belongs to the TRAFAC class dynamin-like GTPase superfamily. GB1/RHD3 GTPase family. RHD3 subfamily.

Its subcellular location is the endoplasmic reticulum membrane. Its function is as follows. Cooperates with the reticulon proteins and tubule-shaping DP1 family proteins to generate and maintain the structure of the tubular endoplasmic reticulum network. Has GTPase activity, which is required for its function in ER organization. The protein is Protein SEY1 of Coccidioides immitis (strain RS) (Valley fever fungus).